Consider the following 709-residue polypeptide: Polyribonucleotide nucleotidyltransferase (709 aa).

Mg(2+) is bound by residues D489 and D495. Positions 556-615 (PKIDMIKIDVDKIKVVIGKGGETIDKIIAETGVKIDIDEEGNVSIFSSDQAAIDRTKDII) constitute a KH domain. The S1 motif domain maps to 625-693 (GEVYHAKVVR…DKGRVDASMK (69 aa)).

This sequence belongs to the polyribonucleotide nucleotidyltransferase family. Mg(2+) serves as cofactor.

The protein localises to the cytoplasm. The catalysed reaction is RNA(n+1) + phosphate = RNA(n) + a ribonucleoside 5'-diphosphate. Involved in mRNA degradation. Catalyzes the phosphorolysis of single-stranded polyribonucleotides processively in the 3'- to 5'-direction. This Streptococcus agalactiae serotype V (strain ATCC BAA-611 / 2603 V/R) protein is Polyribonucleotide nucleotidyltransferase.